Reading from the N-terminus, the 361-residue chain is tRNA/tmRNA (uracil-C(5))-methyltransferase (361 aa).

Residues Q185, Y213, N218, E234, and D294 each coordinate S-adenosyl-L-methionine. C319 acts as the Nucleophile in catalysis. Residue E353 is the Proton acceptor of the active site.

Belongs to the class I-like SAM-binding methyltransferase superfamily. RNA M5U methyltransferase family. TrmA subfamily.

It catalyses the reaction uridine(54) in tRNA + S-adenosyl-L-methionine = 5-methyluridine(54) in tRNA + S-adenosyl-L-homocysteine + H(+). The catalysed reaction is uridine(341) in tmRNA + S-adenosyl-L-methionine = 5-methyluridine(341) in tmRNA + S-adenosyl-L-homocysteine + H(+). In terms of biological role, dual-specificity methyltransferase that catalyzes the formation of 5-methyluridine at position 54 (m5U54) in all tRNAs, and that of position 341 (m5U341) in tmRNA (transfer-mRNA). The polypeptide is tRNA/tmRNA (uracil-C(5))-methyltransferase (Pseudomonas entomophila (strain L48)).